A 533-amino-acid chain; its full sequence is Quinate permease (533 aa).

At 1-21 (MSILALVEDRPTPREVYNWRV) the chain is on the cytoplasmic side. The chain crosses the membrane as a helical span at residues 22–42 (YLLAAVASFTSCMIGYDSAFI). Residues 43–67 (GTTLSLQSFQNEFNWESLNTDLISA) are Extracellular-facing. A helical transmembrane segment spans residues 68 to 88 (NIVSLYQAGAFFGALFAYPIG). The Cytoplasmic portion of the chain corresponds to 89-94 (HFWGRR). Residues 95–115 (WGLMFSALIFFLGAGMMLGAN) traverse the membrane as a helical segment. Residues 116–127 (GDRGLGLIYGGR) lie on the Extracellular side of the membrane. Residues 128-148 (VLAGIGVGAGSNICPIYISEM) form a helical membrane-spanning segment. Residues 149-156 (APPAIRGR) lie on the Cytoplasmic side of the membrane. Residues 157–177 (LVGVYELGWQIGGVVGFWINY) form a helical membrane-spanning segment. Over 178-191 (GVDETLAPSHKQWI) the chain is Extracellular. The helical transmembrane segment at 192 to 212 (IPFAVQLIPAGLLIIGALLIR) threads the bilayer. The Cytoplasmic portion of the chain corresponds to 213–282 (ESPRWLFLRG…AWTNKRILYR (70 aa)). The chain crosses the membrane as a helical span at residues 283 to 303 (LFLGSMLFLWQNGSGINAINY). Topologically, residues 304 to 324 (YSPRVFKSIGVSGGNTSLLTT) are extracellular. Residues 325–346 (GIFGVVKAVITFVWLLYLIDHF) traverse the membrane as a helical segment. Over 347 to 349 (GRR) the chain is Cytoplasmic. Residues 350–370 (NLLLVGAAGGSVCLWIVGGYI) traverse the membrane as a helical segment. Residues 371-385 (KIAKPENNPEGTQLD) lie on the Extracellular side of the membrane. The chain crosses the membrane as a helical span at residues 386 to 406 (SGGIAAIFFFYLWTAFYTPSW). At 407–431 (NGTPWVINSEMFDPTVRSLAQACAA) the chain is on the cytoplasmic side. Residues 432–452 (ASNWLWNFLISRFTPQMFTSM) traverse the membrane as a helical segment. Residues 453–454 (GY) are Extracellular-facing. Residues 455-475 (GVYFFFASLMILSIVFVFFLI) traverse the membrane as a helical segment. The Cytoplasmic portion of the chain corresponds to 476-533 (PETKGVPLESMETLFDKKPVWHAHSQLIRELRENEEAFRADMGASGKGGVTKEYVEEA).

It belongs to the major facilitator superfamily. Sugar transporter (TC 2.A.1.1) family. As to quaternary structure, interacts with creB. Ubiquitinated. Deubiquitinated by creB, probably to control its activity or amount.

The protein localises to the cell membrane. Integral membrane transporter that imports quinic acid to be catabolized as a carbon source. The sequence is that of Quinate permease (qutD) from Emericella nidulans (strain FGSC A4 / ATCC 38163 / CBS 112.46 / NRRL 194 / M139) (Aspergillus nidulans).